Here is a 132-residue protein sequence, read N- to C-terminus: ATP synthase epsilon chain (132 aa).

This sequence belongs to the ATPase epsilon chain family. F-type ATPases have 2 components, CF(1) - the catalytic core - and CF(0) - the membrane proton channel. CF(1) has five subunits: alpha(3), beta(3), gamma(1), delta(1), epsilon(1). CF(0) has three main subunits: a, b and c.

The protein localises to the cell membrane. Its function is as follows. Produces ATP from ADP in the presence of a proton gradient across the membrane. This chain is ATP synthase epsilon chain, found in Desulforamulus reducens (strain ATCC BAA-1160 / DSM 100696 / MI-1) (Desulfotomaculum reducens).